The following is a 354-amino-acid chain: Neutral protease 2 homolog MEP3 (354 aa).

The N-terminal stretch at 1–19 (MHFTSSLLALVALTTQALA) is a signal peptide. Residues 20-179 (FPLNDLPKRD…QSAIPKLEKR (160 aa)) constitute a propeptide that is removed on maturation. Disulfide bonds link C186-C256 and C263-C281. H305 is a Zn(2+) binding site. The active site involves E306. Zn(2+) is bound by residues H309 and D320.

This sequence belongs to the peptidase M35 family. Requires Zn(2+) as cofactor.

It localises to the secreted. It catalyses the reaction Preferential cleavage of bonds with hydrophobic residues in P1'. Also 3-Asn-|-Gln-4 and 8-Gly-|-Ser-9 bonds in insulin B chain.. Its function is as follows. Secreted metalloproteinase that allows assimilation of proteinaceous substrates. Shows high activities on basic nuclear substrates such as histone and protamine. May be involved in virulence. This is Neutral protease 2 homolog MEP3 (MEP3) from Coccidioides posadasii (strain C735) (Valley fever fungus).